The sequence spans 191 residues: Ribonuclease HII (191 aa).

Positions 16 to 191 (INLIGIDEAG…KLHRKSFKLL (176 aa)) constitute an RNase H type-2 domain. The a divalent metal cation site is built by aspartate 22, glutamate 23, and aspartate 110.

The protein belongs to the RNase HII family. The cofactor is Mn(2+). Requires Mg(2+) as cofactor.

It localises to the cytoplasm. It carries out the reaction Endonucleolytic cleavage to 5'-phosphomonoester.. In terms of biological role, endonuclease that specifically degrades the RNA of RNA-DNA hybrids. The chain is Ribonuclease HII from Campylobacter jejuni subsp. jejuni serotype O:6 (strain 81116 / NCTC 11828).